The following is a 114-amino-acid chain: Large ribosomal subunit protein uL22c (114 aa).

The protein belongs to the universal ribosomal protein uL22 family. In terms of assembly, part of the 50S ribosomal subunit.

It localises to the plastid. It is found in the cyanelle. In terms of biological role, this protein binds specifically to 23S rRNA. Its function is as follows. The globular domain of the protein is located near the polypeptide exit tunnel on the outside of the subunit, while an extended beta-hairpin is found that lines the wall of the exit tunnel in the center of the 70S ribosome. This Cyanophora paradoxa protein is Large ribosomal subunit protein uL22c (rpl22).